The primary structure comprises 203 residues: Holliday junction branch migration complex subunit RuvA (203 aa).

The domain I stretch occupies residues 1-64; the sequence is MIGRLRGIIL…EDAQLLYGFN (64 aa). Residues 65 to 142 form a domain II region; the sequence is NKQERMLFRE…KGLHGDLFTP (78 aa). Residues 143-154 form a flexible linker region; the sequence is AADLVLTSPNGP. The interval 155–203 is domain III; the sequence is TSDDAEQEAVAALVALGYKPQEASRMVSKIAKPDANSETLIREALRAAL.

It belongs to the RuvA family. Homotetramer. Forms an RuvA(8)-RuvB(12)-Holliday junction (HJ) complex. HJ DNA is sandwiched between 2 RuvA tetramers; dsDNA enters through RuvA and exits via RuvB. An RuvB hexamer assembles on each DNA strand where it exits the tetramer. Each RuvB hexamer is contacted by two RuvA subunits (via domain III) on 2 adjacent RuvB subunits; this complex drives branch migration. In the full resolvosome a probable DNA-RuvA(4)-RuvB(12)-RuvC(2) complex forms which resolves the HJ.

The protein resides in the cytoplasm. Functionally, the RuvA-RuvB-RuvC complex processes Holliday junction (HJ) DNA during genetic recombination and DNA repair, while the RuvA-RuvB complex plays an important role in the rescue of blocked DNA replication forks via replication fork reversal (RFR). RuvA specifically binds to HJ cruciform DNA, conferring on it an open structure. The RuvB hexamer acts as an ATP-dependent pump, pulling dsDNA into and through the RuvAB complex. HJ branch migration allows RuvC to scan DNA until it finds its consensus sequence, where it cleaves and resolves the cruciform DNA. The sequence is that of Holliday junction branch migration complex subunit RuvA from Enterobacter sp. (strain 638).